The primary structure comprises 238 residues: ATP synthase subunit a (238 aa).

A run of 5 helical transmembrane segments spans residues G18–G38, F76–P96, V117–V137, L173–T193, and W208–Y230.

Belongs to the ATPase A chain family. F-type ATPases have 2 components, CF(1) - the catalytic core - and CF(0) - the membrane proton channel. CF(1) has five subunits: alpha(3), beta(3), gamma(1), delta(1), epsilon(1). CF(0) has three main subunits: a(1), b(2) and c(9-12). The alpha and beta chains form an alternating ring which encloses part of the gamma chain. CF(1) is attached to CF(0) by a central stalk formed by the gamma and epsilon chains, while a peripheral stalk is formed by the delta and b chains.

It is found in the cell membrane. Key component of the proton channel; it plays a direct role in the translocation of protons across the membrane. This is ATP synthase subunit a from Shouchella clausii (strain KSM-K16) (Alkalihalobacillus clausii).